The chain runs to 295 residues: Ribosomal RNA small subunit methyltransferase A (295 aa).

The S-adenosyl-L-methionine site is built by asparagine 25, leucine 27, glycine 52, glutamate 73, aspartate 98, and asparagine 120.

The protein belongs to the class I-like SAM-binding methyltransferase superfamily. rRNA adenine N(6)-methyltransferase family. RsmA subfamily.

Its subcellular location is the cytoplasm. The catalysed reaction is adenosine(1518)/adenosine(1519) in 16S rRNA + 4 S-adenosyl-L-methionine = N(6)-dimethyladenosine(1518)/N(6)-dimethyladenosine(1519) in 16S rRNA + 4 S-adenosyl-L-homocysteine + 4 H(+). Its function is as follows. Specifically dimethylates two adjacent adenosines (A1518 and A1519) in the loop of a conserved hairpin near the 3'-end of 16S rRNA in the 30S particle. May play a critical role in biogenesis of 30S subunits. The chain is Ribosomal RNA small subunit methyltransferase A from Desulfotalea psychrophila (strain LSv54 / DSM 12343).